Reading from the N-terminus, the 254-residue chain is MLQTEMKVIQQTEIADKVYELILTGECVADMSPGQFLMLKPSRSDLLMRRPISICSYDKTAKTCILLYRIEGDGTRDFSKLSEGDTIDVLGPLGKGFDIDQTPAPKTALLIGGGIGVPPMYQLGKELAGKGVQVTFVNGFQSAKDSFYEKEMNAYGTVHIATVDGSLGTQGFVTDITNNFPEEPDVIYSCGPKAMLQAVKASFPETKTYLSLEERMACGIGACYACVCPKADDAKKQFKVCEDGPVFRADEVSL.

The region spanning 1 to 99 (MLQTEMKVIQ…LGPLGKGFDI (99 aa)) is the FAD-binding FR-type domain. Residues 50–53 (RPIS), 67–69 (LYR), and 74–75 (GT) each bind FAD. Residues Cys218, Cys223, Cys226, and Cys241 each contribute to the [2Fe-2S] cluster site.

It belongs to the PyrK family. Heterotetramer of 2 PyrK and 2 PyrD type B subunits. Requires [2Fe-2S] cluster as cofactor. FAD serves as cofactor.

It functions in the pathway pyrimidine metabolism; UMP biosynthesis via de novo pathway; orotate from (S)-dihydroorotate (NAD(+) route): step 1/1. Functionally, responsible for channeling the electrons from the oxidation of dihydroorotate from the FMN redox center in the PyrD type B subunit to the ultimate electron acceptor NAD(+). The chain is Dihydroorotate dehydrogenase B (NAD(+)), electron transfer subunit from Listeria monocytogenes serotype 4b (strain F2365).